We begin with the raw amino-acid sequence, 97 residues long: MEVTDVRLRRVNTDGRMRAIASITLDHEFVVHDIRVIDGNNGLFVAMPSKRTPDGEFRDIAHPINSSTRGKIQDAVLNEYHRLGDSEALEYEEAGAS.

The protein belongs to the SpoVG family.

Essential for sporulation. Interferes with or is a negative regulator of the pathway leading to asymmetric septation. The sequence is that of Putative septation protein SpoVG from Bacillus velezensis (strain DSM 23117 / BGSC 10A6 / LMG 26770 / FZB42) (Bacillus amyloliquefaciens subsp. plantarum).